We begin with the raw amino-acid sequence, 1084 residues long: Transcription elongation factor SPT5 (1084 aa).

Residues 1–91 are disordered; that stretch reads MSDSEDSDFS…DDEYEDEDPW (91 aa). Acidic residues-rich tracts occupy residues 20 to 32, 41 to 62, and 77 to 91; these read AEEV…EEEQ, AEEE…EEDD, and DEAD…EDPW. The segment at 175 to 269 is interaction with SUPT4H1; sequence DPNLWTVKCK…TDVLKVVKEV (95 aa). KOW domains follow at residues 272-305, 419-450, 471-502, and 593-626; these read LKPK…ISLK, LQAG…ITIM, FRMG…VILF, and IHVK…LHCK. Positions 312–419 are interaction with RNA polymerase II; sequence LDRIKARMSM…TTGKEREHNL (108 aa). Residue Ser665 is modified to Phosphoserine. The tract at residues 667–700 is disordered; the sequence is RISSPMHPGGGGQPQRGGGGGGGGGMGRGRGRRD. The span at 674-694 shows a compositional bias: gly residues; it reads PGGGGQPQRGGGGGGGGGMGR. In terms of domain architecture, KOW 5 spans 702 to 735; that stretch reads DLIGQTVRISQGPYKGYIGVVKDATESTARVELH. The tract at residues 748-973 is disordered; it reads LTTVGGKERQ…HTPGSNIDQA (226 aa). The stretch at 758–763 is one CTR1-1; approximate repeat; that stretch reads GRSSTH. The segment at 758-815 is 8 X 7 AA approximate tandem repeats of G-S-[QR]-T-P-X-[YQ], motif CTR1; sequence GRSSTHLRTPMYGSQTPIYGTGSRTPMYGSQTPLHDGSRTPHYGSQTPLHDGSRTPGQ. Residues 759–790 are compositionally biased toward polar residues; the sequence is RSSTHLRTPMYGSQTPIYGTGSRTPMYGSQTP. A CTR1-2; approximate repeat occupies 764 to 769; it reads LRTPMY. One copy of the CTR1-3 repeat lies at 770-776; the sequence is GSQTPIY. 2 positions are modified to phosphothreonine; by CDK9: Thr773 and Thr782. The stretch at 779–785 is one CTR1-4 repeat; the sequence is GSRTPMY. One copy of the CTR1-5 repeat lies at 786–792; that stretch reads GSQTPLH. Residues 794 to 800 form a CTR1-6 repeat; it reads GSRTPHY. A CTR1-7 repeat occupies 801-807; the sequence is GSQTPLH. Residues 809–815 form a CTR1-8 repeat; the sequence is GSRTPGQ. Residues 832 to 842 show a composition bias toward acidic residues; the sequence is DEYEFAYDDEP. A CTR2-1 repeat occupies 842–849; the sequence is PSPSPQGY. The tract at residues 842-948 is 10 X 8 AA approximate tandem repeats of P-[TS]-P-S-P-[QA]-[SG]-Y, motif CTR2; that stretch reads PSPSPQGYGG…ASPSPSPVGY (107 aa). The CTR2-2; approximate repeat unit spans residues 852–860; it reads TPNPQTPGY. The span at 855–864 shows a compositional bias: pro residues; the sequence is PQTPGYPEVP. The CTR2-3; approximate repeat unit spans residues 861–867; it reads PEVPSPQ. The span at 866 to 888 shows a compositional bias: polar residues; it reads PQVNPQYNPQTPGTPAMYNTDQY. The CTR2-4; half-length repeat unit spans residues 879–883; the sequence is TPAMY. Residues 894-900 form a CTR2-5; approximate repeat; the sequence is PSPQGSY. Low complexity predominate over residues 894 to 909; sequence PSPQGSYQPSPSPQSY. One copy of the CTR2-6 repeat lies at 902–909; it reads PSPSPQSY. A CTR2-7; approximate repeat occupies 914–919; the sequence is PSPVGY. The stretch at 922-928 is one CTR2-8 repeat; sequence THSPASY. Residues 930-937 form a CTR2-9 repeat; the sequence is PTPSPMAY. The stretch at 941 to 948 is one CTR2-10 repeat; the sequence is PSPSPVGY.

The protein belongs to the SPT5 family. As to quaternary structure, interacts with SUPT4H1 to form the DSIF complex. DSIF interacts with RNA polymerase II and with the positive transcription elongation factor b complex (P-TEFb complex), which is composed of CDK9 and cyclin-T. In terms of processing, phosphorylated. Phosphorylation by P-TEFb (CDK9) at Thr residues of the C-terminal repeats alleviates transcriptional pausing and promotes transcription elongation.

It is found in the nucleus. Its function is as follows. Component of the DRB sensitivity-inducing factor complex (DSIF complex), which regulates mRNA processing and transcription elongation by RNA polymerase II. DSIF positively regulates mRNA capping by stimulating the mRNA guanylyltransferase activity of RNGTT/CAP1A. DSIF also acts cooperatively with the negative elongation factor complex (NELF complex) to enhance transcriptional pausing at sites proximal to the promoter. Transcriptional pausing may facilitate the assembly of an elongation competent RNA polymerase II complex. DSIF and NELF promote pausing by inhibition of the transcription elongation factor TFIIS/S-II. TFIIS/S-II binds to RNA polymerase II at transcription pause sites and stimulates the weak intrinsic nuclease activity of the enzyme. Cleavage of blocked transcripts by RNA polymerase II promotes the resumption of transcription from the new 3' terminus and may allow repeated attempts at transcription through natural pause sites. Following phosphorylation by CDK9, DSIF can also positively regulate transcriptional elongation. Regulation of transcriptional elongation by this protein is required for the expression of genes which control neuronal development. The polypeptide is Transcription elongation factor SPT5 (supt5h) (Danio rerio (Zebrafish)).